A 500-amino-acid chain; its full sequence is MVLAASPEAYRKVIEYGIKKTKLRIDRLFLQAIMAGIYVGMAGHACTALAGAYSTDPANPLAVSKATQKFLYASLFPVAFIAIIFTGAELFTGNTMTMLVCLLERRVTALQLCINWICSLVGNWAGALFAAYFLSYLPGVLQDPDHLHYLEDVAAHKTELSFLQCFCLAVGCNTFVCLAVWFVIASDDAAGKIMSMWFPIVSFCVAGYEHIIANFYTLQCALMHGVGPGVGTVILKNFIPTLLGNIVGGCGLVGAVYWYNFYPTVCVVQEARQPLPLSENAPSSTRQVVADLFSLWGRESSTPGVSASPPDAATNAGCSALDPPRNALLAAGKNFGNLSAGDRGALAEGIPGGACEDCLLVPRASFGGEYHPPQQGDAGRWCKPSKAAVGSGGVLCHVQSPAALEAVSNSPLRENSGVPSGGLLLCEGRVRRSSREREPERGGEEEGASPEEDHPAVTLSIPPTDFHPHVPREVEQSSLLEETRVAAENSALEEHPASTI.

Over 1-31 (MVLAASPEAYRKVIEYGIKKTKLRIDRLFLQ) the chain is Cytoplasmic. A helical membrane pass occupies residues 32–52 (AIMAGIYVGMAGHACTALAGA). The Extracellular portion of the chain corresponds to 53-69 (YSTDPANPLAVSKATQK). The helical transmembrane segment at 70–90 (FLYASLFPVAFIAIIFTGAEL) threads the bilayer. Topologically, residues 91 to 113 (FTGNTMTMLVCLLERRVTALQLC) are cytoplasmic. Residues 114-134 (INWICSLVGNWAGALFAAYFL) traverse the membrane as a helical segment. At 135 to 164 (SYLPGVLQDPDHLHYLEDVAAHKTELSFLQ) the chain is on the extracellular side. The chain crosses the membrane as a helical span at residues 165–185 (CFCLAVGCNTFVCLAVWFVIA). Topologically, residues 186–192 (SDDAAGK) are cytoplasmic. A helical transmembrane segment spans residues 193 to 213 (IMSMWFPIVSFCVAGYEHIIA). Over 214 to 237 (NFYTLQCALMHGVGPGVGTVILKN) the chain is Extracellular. The helical transmembrane segment at 238 to 258 (FIPTLLGNIVGGCGLVGAVYW) threads the bilayer. Over 259–500 (YNFYPTVCVV…ALEEHPASTI (242 aa)) the chain is Cytoplasmic. A disordered region spans residues 411-500 (PLRENSGVPS…ALEEHPASTI (90 aa)). Composition is skewed to basic and acidic residues over residues 428–444 (GRVR…RGGE) and 466–485 (FHPH…ETRV).

The protein belongs to the FNT transporter (TC 1.A.16) family. In terms of assembly, homopentamer.

It localises to the cell membrane. The catalysed reaction is (S)-lactate(in) + H(+)(in) = (S)-lactate(out) + H(+)(out). It catalyses the reaction formate(in) + H(+)(in) = formate(out) + H(+)(out). The enzyme catalyses pyruvate(out) + H(+)(out) = pyruvate(in) + H(+)(in). It carries out the reaction acetate(out) + H(+)(out) = acetate(in) + H(+)(in). With respect to regulation, inhibited by p-chloromercuribenzene sulfonate (pCMBS). Methyl methanethiosulfonate (MMTS) inhibits L-lactate but not formate transport. Inhibited by the Malaria Box compound MMV007839. Inhibited by BH-296, BH-317, BH-326 and BH-388 compounds. Its function is as follows. Monocarboxylate-proton symporter; active in acidic-to-neutral pH range. Transports L-lactate and formate. The chain is Formate-nitrite transporter 3 from Toxoplasma gondii (strain ATCC 50611 / Me49).